Consider the following 163-residue polypeptide: Cytochrome b6-f complex subunit 4 (163 aa).

3 helical membrane passes run leucine 36–valine 56, leucine 95–glutamate 115, and threonine 131–isoleucine 151.

The protein belongs to the cytochrome b family. PetD subfamily. In terms of assembly, the 4 large subunits of the cytochrome b6-f complex are cytochrome b6, subunit IV (17 kDa polypeptide, petD), cytochrome f and the Rieske protein, while the 4 small subunits are petG, petL, petM and petN. The complex functions as a dimer.

The protein localises to the plastid. Its subcellular location is the chloroplast thylakoid membrane. Component of the cytochrome b6-f complex, which mediates electron transfer between photosystem II (PSII) and photosystem I (PSI), cyclic electron flow around PSI, and state transitions. In Phalaenopsis aphrodite subsp. formosana (Moth orchid), this protein is Cytochrome b6-f complex subunit 4.